Here is a 561-residue protein sequence, read N- to C-terminus: uncharacterized protein (561 aa).

Over residues 314-323 (ANNGSGDSSS) the composition is skewed to low complexity. Residues 314 to 366 (ANNGSGDSSSTALNNESPNTTPKSRTFFSPKGHRRNSSHVSSLTSRSTKKPIT) form a disordered region. Polar residues predominate over residues 324–340 (TALNNESPNTTPKSRTF). Phosphoserine is present on Ser514.

It is found in the cytoplasm. This is an uncharacterized protein from Saccharomyces cerevisiae (strain ATCC 204508 / S288c) (Baker's yeast).